The following is a 241-amino-acid chain: Large ribosomal subunit protein uL3 (241 aa).

2 disordered regions span residues 140–162 (SHRSIGSTGGRQDPGKTFKNKKM) and 217–241 (PLPGKFRENGASAPATEAPAAEETA). The residue at position 151 (Gln151) is an N5-methylglutamine. Over residues 229 to 241 (APATEAPAAEETA) the composition is skewed to low complexity.

This sequence belongs to the universal ribosomal protein uL3 family. As to quaternary structure, part of the 50S ribosomal subunit. Forms a cluster with proteins L14 and L19. In terms of processing, methylated by PrmB.

One of the primary rRNA binding proteins, it binds directly near the 3'-end of the 23S rRNA, where it nucleates assembly of the 50S subunit. The sequence is that of Large ribosomal subunit protein uL3 from Methylobacterium radiotolerans (strain ATCC 27329 / DSM 1819 / JCM 2831 / NBRC 15690 / NCIMB 10815 / 0-1).